We begin with the raw amino-acid sequence, 154 residues long: Myoglobin (154 aa).

The 147-residue stretch at 2 to 148 (GLSDGEWQMV…FRNDIAAKYK (147 aa)) folds into the Globin domain. Phosphoserine is present on residues serine 4 and serine 32. Position 65 (histidine 65) interacts with nitrite. Histidine 65 contributes to the O2 binding site. Threonine 68 is modified (phosphothreonine). Heme b is bound at residue histidine 94. A phosphoserine mark is found at serine 121 and serine 133.

The protein belongs to the globin family. Monomeric.

The protein localises to the cytoplasm. It is found in the sarcoplasm. It carries out the reaction Fe(III)-heme b-[protein] + nitric oxide + H2O = Fe(II)-heme b-[protein] + nitrite + 2 H(+). The enzyme catalyses H2O2 + AH2 = A + 2 H2O. In terms of biological role, monomeric heme protein which primary function is to store oxygen and facilitate its diffusion within muscle tissues. Reversibly binds oxygen through a pentacoordinated heme iron and enables its timely and efficient release as needed during periods of heightened demand. Depending on the oxidative conditions of tissues and cells, and in addition to its ability to bind oxygen, it also has a nitrite reductase activity whereby it regulates the production of bioactive nitric oxide. Under stress conditions, like hypoxia and anoxia, it also protects cells against reactive oxygen species thanks to its pseudoperoxidase activity. The chain is Myoglobin from Rattus norvegicus (Rat).